We begin with the raw amino-acid sequence, 440 residues long: 3-phosphoshikimate 1-carboxyvinyltransferase (440 aa).

3-phosphoshikimate-binding residues include Lys-26, Ser-27, and Arg-31. A phosphoenolpyruvate-binding site is contributed by Lys-26. Phosphoenolpyruvate is bound by residues Gly-100 and Arg-134. 7 residues coordinate 3-phosphoshikimate: Ser-180, Ser-181, Gln-182, Ser-208, Asp-323, Asn-346, and Lys-350. Gln-182 lines the phosphoenolpyruvate pocket. Asp-323 functions as the Proton acceptor in the catalytic mechanism. The phosphoenolpyruvate site is built by Arg-354, Arg-398, and Lys-423.

This sequence belongs to the EPSP synthase family. Monomer.

It is found in the cytoplasm. The enzyme catalyses 3-phosphoshikimate + phosphoenolpyruvate = 5-O-(1-carboxyvinyl)-3-phosphoshikimate + phosphate. Its pathway is metabolic intermediate biosynthesis; chorismate biosynthesis; chorismate from D-erythrose 4-phosphate and phosphoenolpyruvate: step 6/7. Catalyzes the transfer of the enolpyruvyl moiety of phosphoenolpyruvate (PEP) to the 5-hydroxyl of shikimate-3-phosphate (S3P) to produce enolpyruvyl shikimate-3-phosphate and inorganic phosphate. The sequence is that of 3-phosphoshikimate 1-carboxyvinyltransferase from Pasteurella multocida (strain Pm70).